Reading from the N-terminus, the 144-residue chain is 3-dehydroquinate dehydratase (144 aa).

Y24 (proton acceptor) is an active-site residue. Residues N76, H82, and D89 each coordinate substrate. The active-site Proton donor is the H102. Substrate contacts are provided by residues 103 to 104 and R113; that span reads LS.

The protein belongs to the type-II 3-dehydroquinase family. As to quaternary structure, homododecamer.

It catalyses the reaction 3-dehydroquinate = 3-dehydroshikimate + H2O. It functions in the pathway metabolic intermediate biosynthesis; chorismate biosynthesis; chorismate from D-erythrose 4-phosphate and phosphoenolpyruvate: step 3/7. In terms of biological role, catalyzes a trans-dehydration via an enolate intermediate. In Bordetella petrii (strain ATCC BAA-461 / DSM 12804 / CCUG 43448), this protein is 3-dehydroquinate dehydratase.